The following is a 316-amino-acid chain: Pantothenate kinase (316 aa).

Residue 95-102 (GSVAVGKS) coordinates ATP.

This sequence belongs to the prokaryotic pantothenate kinase family.

The protein resides in the cytoplasm. It catalyses the reaction (R)-pantothenate + ATP = (R)-4'-phosphopantothenate + ADP + H(+). It participates in cofactor biosynthesis; coenzyme A biosynthesis; CoA from (R)-pantothenate: step 1/5. This chain is Pantothenate kinase, found in Cronobacter sakazakii (strain ATCC BAA-894) (Enterobacter sakazakii).